The chain runs to 245 residues: U21-ctenitoxin-Pn1a (245 aa).

The 245-residue stretch at 1 to 245 (IVYGTVTTPG…FRSWMDKVMT (245 aa)) folds into the Peptidase S1 domain. Residues Cys30 and Cys46 are joined by a disulfide bond. Active-site charge relay system residues include His45 and Asp95. 2 cysteine pairs are disulfide-bonded: Cys161–Cys183 and Cys192–Cys221. The Charge relay system role is filled by Ser196.

Expressed by the venom gland.

The protein resides in the secreted. Protease. Hydrolyzes gelatin and succinyl casein. This is U21-ctenitoxin-Pn1a from Phoneutria nigriventer (Brazilian armed spider).